The primary structure comprises 573 residues: Sulfite reductase [NADPH] hemoprotein beta-component (573 aa).

Residues Cys-438, Cys-444, Cys-483, and Cys-487 each coordinate [4Fe-4S] cluster. Cys-487 is a binding site for siroheme.

The protein belongs to the nitrite and sulfite reductase 4Fe-4S domain family. In terms of assembly, alpha(8)-beta(8). The alpha component is a flavoprotein, the beta component is a hemoprotein. Requires siroheme as cofactor. The cofactor is [4Fe-4S] cluster.

It carries out the reaction hydrogen sulfide + 3 NADP(+) + 3 H2O = sulfite + 3 NADPH + 4 H(+). The protein operates within sulfur metabolism; hydrogen sulfide biosynthesis; hydrogen sulfide from sulfite (NADPH route): step 1/1. Its function is as follows. Component of the sulfite reductase complex that catalyzes the 6-electron reduction of sulfite to sulfide. This is one of several activities required for the biosynthesis of L-cysteine from sulfate. The chain is Sulfite reductase [NADPH] hemoprotein beta-component from Geobacillus thermodenitrificans (strain NG80-2).